The chain runs to 410 residues: Serine hydroxymethyltransferase (410 aa).

Residues Leu119 and 123–125 (GHL) contribute to the (6S)-5,6,7,8-tetrahydrofolate site. Lys228 carries the N6-(pyridoxal phosphate)lysine modification. Residue 351–353 (SPF) participates in (6S)-5,6,7,8-tetrahydrofolate binding.

This sequence belongs to the SHMT family. Homodimer. Pyridoxal 5'-phosphate is required as a cofactor.

Its subcellular location is the cytoplasm. The enzyme catalyses (6R)-5,10-methylene-5,6,7,8-tetrahydrofolate + glycine + H2O = (6S)-5,6,7,8-tetrahydrofolate + L-serine. Its pathway is one-carbon metabolism; tetrahydrofolate interconversion. It participates in amino-acid biosynthesis; glycine biosynthesis; glycine from L-serine: step 1/1. Its function is as follows. Catalyzes the reversible interconversion of serine and glycine with tetrahydrofolate (THF) serving as the one-carbon carrier. This reaction serves as the major source of one-carbon groups required for the biosynthesis of purines, thymidylate, methionine, and other important biomolecules. Also exhibits THF-independent aldolase activity toward beta-hydroxyamino acids, producing glycine and aldehydes, via a retro-aldol mechanism. In Clostridium perfringens (strain 13 / Type A), this protein is Serine hydroxymethyltransferase.